An 89-amino-acid polypeptide reads, in one-letter code: DNA-directed RNA polymerase subunit omega (89 aa).

It belongs to the RNA polymerase subunit omega family. As to quaternary structure, the RNAP catalytic core consists of 2 alpha, 1 beta, 1 beta' and 1 omega subunit. When a sigma factor is associated with the core the holoenzyme is formed, which can initiate transcription.

It catalyses the reaction RNA(n) + a ribonucleoside 5'-triphosphate = RNA(n+1) + diphosphate. Promotes RNA polymerase assembly. Latches the N- and C-terminal regions of the beta' subunit thereby facilitating its interaction with the beta and alpha subunits. The polypeptide is DNA-directed RNA polymerase subunit omega (Clavibacter michiganensis subsp. michiganensis (strain NCPPB 382)).